The primary structure comprises 1493 residues: Protein RNA-directed DNA methylation 3 (1493 aa).

Disordered stretches follow at residues 1–34 and 54–96; these read MDRK…EGLR and GYYG…SSFV. Positions 21–28 match the Nuclear localization signal motif; that stretch reads KRKNSVEF. A compositionally biased stretch (basic and acidic residues) spans 24–34; it reads NSVEFRDEGLR. Residues 60 to 80 are compositionally biased toward acidic residues; it reads SDEDDDGLGFLNDMEDEPEVE. Positions 81–92 are enriched in basic and acidic residues; that stretch reads ESSKAGKGEKGK. Residues 239 to 266 form the KOW 1 domain; sequence KVSEGTWARVKNGKYKGDLAQIVAVSDT. The interval 393–432 is disordered; that stretch reads PTCREGGKGEGSGGGKGEGSGGGKGEGSRGGKGEGSSDFK. Residues 401 to 417 are compositionally biased toward gly residues; the sequence is GEGSGGGKGEGSGGGKG. Residues 418 to 432 are compositionally biased toward basic and acidic residues; that stretch reads EGSRGGKGEGSSDFK. Residues 501-528 form the KOW 2 domain; that stretch reads QISVNDVVKISKGPSEGKQGVVRQVYRG. Positions 578–602 are disordered; sequence SSPKSPLSPEKEWQPRERYNSSNQG. Basic and acidic residues predominate over residues 586–596; sequence PEKEWQPRERY. In terms of domain architecture, KOW 3 spans 607-634; that stretch reads TYSIGQKLRIRVGPLKGYLCRVIALRYS. Disordered stretches follow at residues 692–711, 728–747, and 757–1493; these read IGAG…PSTD, EKNP…TVAD, and AAEN…KTGW. Residues 732 to 741 form repeat 1; it reads WGGSKPTSDV. Residues 732–1493 form a 42 X 9 AA approximate WG/GW-rich tandem repeats region; that stretch reads WGGSKPTSDV…WGTGDKKTGW (762 aa). The segment covering 757–767 has biased composition (low complexity); sequence AAENKPASASD. Repeat copies occupy residues 775–784, 789–797, 818–827, 836–845, 854–863, 866–875, 883–892, 917–926, 935–943, 944–953, 954–962, 963–972, 978–987, 1003–1012, 1013–1022, 1023–1032, 1033–1042, 1043–1052, 1053–1062, 1063–1072, 1073–1082, 1132–1141, 1144–1153, 1156–1165, 1167–1176, 1180–1189, 1192–1201, 1204–1213, 1217–1226, 1229–1238, 1241–1250, 1253–1262, 1266–1275, 1278–1287, 1290–1299, 1302–1311, and 1314–1323. Over residues 790-812 the composition is skewed to polar residues; that stretch reads GDTSASNVEASSWEKQGASTSNV. A compositionally biased stretch (basic and acidic residues) spans 846-860; that stretch reads SQKKEESSWGKKGGS. A compositionally biased stretch (polar residues) spans 866 to 875; the sequence is WGNKDGNSSA. Positions 955 to 1090 are enriched in basic and acidic residues; the sequence is GKKDDGGSWG…YSEQTFDRGG (136 aa). The span at 1122–1134 shows a compositional bias: low complexity; it reads PWSKPSGGSSWGK. Positions 1156 to 1172 are enriched in polar residues; that stretch reads WGKQDNGVGSSWGKQND. The segment covering 1186-1213 has biased composition (gly residues); that stretch reads AGGGSSWGKQDSGGDGSSWGKQDGGGDS. Residues 1218-1231 are compositionally biased toward polar residues; the sequence is GKQNNTSGGSSWGK. Residues 1235-1264 show a composition bias toward gly residues; the sequence is AGGGSSWGKQDGGGGGSSWGKQDGGGGSGS. Over residues 1270–1283 the composition is skewed to polar residues; the sequence is NETSNGSSWGKQND. A compositionally biased stretch (gly residues) spans 1284–1321; the sequence is SGGGSSWGKQDGGGGGSSWGKQNDGGGGSSWGKQGDGG. Polar residues-rich tracts occupy residues 1366–1382 and 1392–1401; these read WKTD…QSGG and DSNNSKPSGS. Repeat unit 39 spans residues 1389 to 1398; it reads WGEDSNNSKP. Residues 1416-1430 are compositionally biased toward basic and acidic residues; the sequence is NSKKETNDKPGDDSK. Residues 1432-1442 are compositionally biased toward polar residues; that stretch reads AWGTSNDQVNT. 3 consecutive repeat copies span residues 1433–1442, 1467–1475, and 1484–1493.

As to quaternary structure, interacts with AGO4 via its C-terminal region and with RNA transcripts. Binds chromatin at loci subject to transcriptional silencing downstream of RNA Polymerase V, but independently from the presence of 24-nt siRNA.

The protein resides in the nucleus. It is found in the nucleoplasm. In terms of biological role, effector of RNA-directed DNA methylation (RdDM) triggered by small interfering RNAs (siRNAs, 24-nt RNAs). Functions as an adapter protein that binds scaffold transcripts generated by polymerase V and recruits AGO4 and AGO4-bound siRNAs to form an RdDM effector complex. Promotes the expression of 24-nt RNAs. Required for the initial establishment of DNA methylation. Together with AGO4, required for transcriptional gene silencing (TGS) by DNA methylation and repressive histone modifications (H3K9me2) of several chromatin loci. The chain is Protein RNA-directed DNA methylation 3 from Arabidopsis thaliana (Mouse-ear cress).